A 603-amino-acid polypeptide reads, in one-letter code: Protein SHORT-ROOT 2 (603 aa).

Disordered stretches follow at residues 11 to 58 and 106 to 140; these read HHHH…HSHS and DFSS…SSAG. The segment covering 31-44 has biased composition (low complexity); it reads SYPSSRGSTSSPSS. Over residues 45–58 the composition is skewed to basic residues; it reads HHTHNHTYYHHSHS. Positions 108-125 are enriched in low complexity; it reads SSSSSSRQFHSGTGAPSS. Residues 179-602 enclose the GRAS domain; it reads AAPSSSGRWA…QPVVWASAWK (424 aa). The interval 186 to 249 is leucine repeat I (LRI); sequence RWAAQLLMEC…LTTSGPRTLR (64 aa). Residues 268–354 are VHIID; that stretch reads ALKFQELSPW…DTPHLSITTV (87 aa). Positions 318–322 match the VHIID motif; that stretch reads LHILD. Positions 370–406 are leucine repeat II (LRII); the sequence is EIGQRLEKFARLMGVPFSFRAVHHSGDLADLDLAALD. Positions 416-514 are PFYRE; it reads LAVNCVNALR…ERAVGRAIVD (99 aa). Residues 517–602 form an SAW region; it reads SCPASQSAER…QPVVWASAWK (86 aa).

The protein belongs to the GRAS family. Does not interact with SCR1.

Its subcellular location is the nucleus. Its function is as follows. Putative transcription factor involved in asymmetric cell division. The sequence is that of Protein SHORT-ROOT 2 (SHR2) from Oryza sativa subsp. japonica (Rice).